The chain runs to 285 residues: Inositol monophosphatase 1 (285 aa).

Mg(2+) is bound by residues E73, D93, I95, and D96. E73 contacts substrate. Residues 95 to 98 (IDGT), 198 to 200 (GTA), E217, and D224 contribute to the substrate site. D224 provides a ligand contact to Mg(2+).

This sequence belongs to the inositol monophosphatase superfamily. Homodimer. Mg(2+) serves as cofactor.

The protein localises to the cytoplasm. It catalyses the reaction a myo-inositol phosphate + H2O = myo-inositol + phosphate. It carries out the reaction 1D-myo-inositol 1-phosphate + H2O = myo-inositol + phosphate. The catalysed reaction is 1D-myo-inositol 2-phosphate + H2O = myo-inositol + phosphate. The enzyme catalyses 1D-myo-inositol 3-phosphate + H2O = myo-inositol + phosphate. It catalyses the reaction 1D-myo-inositol 4-phosphate + H2O = myo-inositol + phosphate. It carries out the reaction 1D-myo-inositol 5-phosphate + H2O = myo-inositol + phosphate. The catalysed reaction is 1D-myo-inositol 6-phosphate + H2O = myo-inositol + phosphate. The enzyme catalyses scyllo-inositol 1-phosphate + H2O = scyllo-inositol + phosphate. It catalyses the reaction alpha-D-galactose 1-phosphate + H2O = D-galactose + phosphate. It carries out the reaction alpha-D-glucose 1-phosphate + H2O = D-glucose + phosphate. The catalysed reaction is D-glucose 6-phosphate + H2O = D-glucose + phosphate. The enzyme catalyses beta-D-fructose 1-phosphate + H2O = D-fructose + phosphate. It catalyses the reaction glycerol 2-phosphate + H2O = glycerol + phosphate. It carries out the reaction adenosine 2'-phosphate + H2O = adenosine + phosphate. Its pathway is polyol metabolism; myo-inositol biosynthesis; myo-inositol from D-glucose 6-phosphate: step 2/2. Its activity is regulated as follows. Inhibited by Li(+), Ca(2+) and Mn(2+), but also by Mg(2+) at concentrations above 3 mM. In terms of biological role, phosphatase involved in the dephosphorylation of myo-inositol monophosphate to generate myo-inositol. Is also able to dephosphorylate scyllo-inositol-phosphate, myo-inositol 1,4-diphosphate, scyllo-inositol-1,3-diphosphate and scyllo-inositol-1,4-diphosphate. Also dephosphorylates in vitro other sugar-phosphates including D-galactose-1-phosphate, glucose-1-phosphate, glucose-6-phosphate, fructose-1-phosphate, beta-glycerophosphate and 2'-AMP. Responsible for the provision of inositol required for synthesis of phosphatidylinositol and polyphosphoinositides, and involved in maintaining normal brain function. Has been implicated as the pharmacological target for lithium Li(+) action in brain. The sequence is that of Inositol monophosphatase 1 (impa1) from Xenopus laevis (African clawed frog).